Here is a 171-residue protein sequence, read N- to C-terminus: Lipoprotein signal peptidase (171 aa).

Helical transmembrane passes span 8-28 (SFLWLSAVAFVVDLLTKYIVV), 64-84 (WQQYFFILLALAISGMLVYFL), and 96-118 (SAYALIIGGALANMVDRTYNGFV). Active-site residues include Asp120 and Asp138. Residues 133–153 (VFNIADIAICIGAGLLALDAF) form a helical membrane-spanning segment.

It belongs to the peptidase A8 family.

The protein localises to the cell inner membrane. The catalysed reaction is Release of signal peptides from bacterial membrane prolipoproteins. Hydrolyzes -Xaa-Yaa-Zaa-|-(S,diacylglyceryl)Cys-, in which Xaa is hydrophobic (preferably Leu), and Yaa (Ala or Ser) and Zaa (Gly or Ala) have small, neutral side chains.. It functions in the pathway protein modification; lipoprotein biosynthesis (signal peptide cleavage). In terms of biological role, this protein specifically catalyzes the removal of signal peptides from prolipoproteins. This Haemophilus influenzae (strain 86-028NP) protein is Lipoprotein signal peptidase.